Here is a 364-residue protein sequence, read N- to C-terminus: Selection and upkeep of intraepithelial T-cells protein 11 (364 aa).

An N-terminal signal peptide occupies residues 1–28; the sequence is MEPSASCLPGFFMVCILLKITVLTQVMS. An Ig-like V-type domain is found at 29–118; that stretch reads LDIQINTQIP…TNQEKRRSII (90 aa). Topologically, residues 29-138 are extracellular; that stretch reads LDIQINTQIP…MSLMSNNLLY (110 aa). Cys-48 and Cys-102 are disulfide-bonded. Residues 139 to 159 traverse the membrane as a helical segment; it reads LGIYLIFILFLNFLKGILFCL. The Cytoplasmic portion of the chain corresponds to 160–186; the sequence is TKRLVHFRKRMIKIKKVWSNKTRACCP. A helical transmembrane segment spans residues 187–207; the sequence is LIWEFLEIVLFIAFLPLYLMF. Residues 208–230 are Extracellular-facing; sequence RIRVFTLDEAHILYNNWLWKVCK. Residues 231 to 251 form a helical membrane-spanning segment; sequence TLIAMMILFTVLILFLLWTLN. Over 252-364 the chain is Cytoplasmic; that stretch reads RYGKMPCLSS…LYSKLGNLTH (113 aa).

The protein belongs to the SKINT family. In terms of tissue distribution, expressed in skin and thymus.

Its subcellular location is the membrane. In terms of biological role, may act by engaging a cell surface molecule on immature T-cells in the embryonic thymus. This chain is Selection and upkeep of intraepithelial T-cells protein 11 (Skint11), found in Mus musculus (Mouse).